Consider the following 334-residue polypeptide: Glyceraldehyde-3-phosphate dehydrogenase 2 (334 aa).

NAD(+) is bound by residues 12–13 (RI), Asp35, and Arg79. D-glyceraldehyde 3-phosphate is bound by residues 152–154 (SCT), Thr183, Arg198, 211–212 (SG), and Arg234. The Nucleophile role is filled by Cys153. Asn315 contacts NAD(+).

This sequence belongs to the glyceraldehyde-3-phosphate dehydrogenase family. Homotetramer.

Its subcellular location is the cytoplasm. It catalyses the reaction D-glyceraldehyde 3-phosphate + phosphate + NAD(+) = (2R)-3-phospho-glyceroyl phosphate + NADH + H(+). Its pathway is carbohydrate degradation; glycolysis; pyruvate from D-glyceraldehyde 3-phosphate: step 1/5. Inhibited by pentalenolactone (PL). In terms of biological role, catalyzes the oxidative phosphorylation of glyceraldehyde 3-phosphate (G3P) to 1,3-bisphosphoglycerate (BPG) using the cofactor NAD. The first reaction step involves the formation of a hemiacetal intermediate between G3P and a cysteine residue, and this hemiacetal intermediate is then oxidized to a thioester, with concomitant reduction of NAD to NADH. The reduced NADH is then exchanged with the second NAD, and the thioester is attacked by a nucleophilic inorganic phosphate to produce BPG. This Streptomyces arenae protein is Glyceraldehyde-3-phosphate dehydrogenase 2 (gap2).